Reading from the N-terminus, the 343-residue chain is Malate dehydrogenase, peroxisomal (343 aa).

NAD(+) is bound by residues glycine 8–glycine 14 and aspartate 34. Residues arginine 80 and arginine 86 each contribute to the substrate site. NAD(+) contacts are provided by residues asparagine 93 and isoleucine 116–asparagine 118. The substrate site is built by asparagine 118 and arginine 152. The Proton acceptor role is filled by histidine 187. Methionine 237 provides a ligand contact to NAD(+).

This sequence belongs to the LDH/MDH superfamily. MDH type 1 family. In terms of assembly, homodimer.

The protein resides in the peroxisome. The catalysed reaction is (S)-malate + NAD(+) = oxaloacetate + NADH + H(+). The sequence is that of Malate dehydrogenase, peroxisomal (MDH3) from Saccharomyces cerevisiae (strain ATCC 204508 / S288c) (Baker's yeast).